Consider the following 534-residue polypeptide: Peptide chain release factor 3 (534 aa).

The region spanning 9–278 (ARRRTFAIIS…FFVEHAPSPQ (270 aa)) is the tr-type G domain. GTP contacts are provided by residues 18–25 (SHPDAGKT), 86–90 (DTPGH), and 140–143 (NKLD).

The protein belongs to the TRAFAC class translation factor GTPase superfamily. Classic translation factor GTPase family. PrfC subfamily.

It is found in the cytoplasm. Its function is as follows. Increases the formation of ribosomal termination complexes and stimulates activities of RF-1 and RF-2. It binds guanine nucleotides and has strong preference for UGA stop codons. It may interact directly with the ribosome. The stimulation of RF-1 and RF-2 is significantly reduced by GTP and GDP, but not by GMP. The protein is Peptide chain release factor 3 of Xylella fastidiosa (strain M12).